We begin with the raw amino-acid sequence, 253 residues long: PVAGEENQYIAYVAYPLDLFEEGSVTNMFTSIVGNVFGFKALRALRLEDLRIPTAYVKTFQGPPHGIQVERDKLNKYGRPLLGCTIKPKLGLSAKNYGRAVYECLRGGLDFTKDDENVNSQPFMRWRDRFLFCAEALYKAQAETGEIKGHYLNATAGTCEEMMKRAIFARELGVPIVMHDYLTGGFTANTSLAHYCRDNGLLLHIHRAMHAVIDRQKNHGIHFRVLAKALRMSGGDHIHSGTVVGKLEGERDI.

Positions 35 and 85 each coordinate substrate. The active-site Proton acceptor is the Lys87. A substrate-binding site is contributed by Lys89. Positions 113, 115, and 116 each coordinate Mg(2+). Lys113 carries the N6-carboxylysine modification. His206 serves as the catalytic Proton acceptor. Residues Arg207 and His239 each coordinate substrate.

This sequence belongs to the RuBisCO large chain family. Type I subfamily. As to quaternary structure, heterohexadecamer of 8 large chains and 8 small chains; disulfide-linked. The disulfide link is formed within the large subunit homodimers. Requires Mg(2+) as cofactor. Post-translationally, the disulfide bond which can form in the large chain dimeric partners within the hexadecamer appears to be associated with oxidative stress and protein turnover.

The protein localises to the plastid. Its subcellular location is the chloroplast. The catalysed reaction is 2 (2R)-3-phosphoglycerate + 2 H(+) = D-ribulose 1,5-bisphosphate + CO2 + H2O. It catalyses the reaction D-ribulose 1,5-bisphosphate + O2 = 2-phosphoglycolate + (2R)-3-phosphoglycerate + 2 H(+). Its function is as follows. RuBisCO catalyzes two reactions: the carboxylation of D-ribulose 1,5-bisphosphate, the primary event in carbon dioxide fixation, as well as the oxidative fragmentation of the pentose substrate in the photorespiration process. Both reactions occur simultaneously and in competition at the same active site. The sequence is that of Ribulose bisphosphate carboxylase large chain (rbcL) from Magnolia latahensis (Apocynophyllum latahense).